Reading from the N-terminus, the 249-residue chain is Triosephosphate isomerase (249 aa).

The substrate site is built by Asn-10 and Lys-12. The Electrophile role is filled by His-94. The active-site Proton acceptor is Glu-166.

This sequence belongs to the triosephosphate isomerase family. Homodimer.

It catalyses the reaction D-glyceraldehyde 3-phosphate = dihydroxyacetone phosphate. The protein operates within carbohydrate biosynthesis; gluconeogenesis. It participates in carbohydrate degradation; glycolysis; D-glyceraldehyde 3-phosphate from glycerone phosphate: step 1/1. This chain is Triosephosphate isomerase (tpiA), found in Emericella nidulans (strain FGSC A4 / ATCC 38163 / CBS 112.46 / NRRL 194 / M139) (Aspergillus nidulans).